Consider the following 340-residue polypeptide: Protein AC11 (340 aa).

In terms of biological role, plays an essential role in nucleocapsid egress from the host nucleus to form the budded virion (BV). Does not participate in nucleocapsid formation. The polypeptide is Protein AC11 (Autographa californica nuclear polyhedrosis virus (AcMNPV)).